The chain runs to 272 residues: Probable proteasome subunit beta type-5 (272 aa).

The propeptide at 1 to 61 (MNSIVSKYTQ…KHCLIKMNHG (61 aa)) is removed in mature form. The Nucleophile role is filled by threonine 62.

This sequence belongs to the peptidase T1B family. In terms of assembly, the 26S proteasome consists of a 20S proteasome core and two 19S regulatory subunits. The 20S proteasome core is composed of 28 subunits that are arranged in four stacked rings, resulting in a barrel-shaped structure. The two end rings are each formed by seven alpha subunits, and the two central rings are each formed by seven beta subunits. The catalytic chamber with the active sites is on the inside of the barrel.

The protein resides in the cytoplasm. It localises to the nucleus. The catalysed reaction is Cleavage of peptide bonds with very broad specificity.. In terms of biological role, the proteasome is a multicatalytic proteinase complex which is characterized by its ability to cleave peptides with Arg, Phe, Tyr, Leu, and Glu adjacent to the leaving group at neutral or slightly basic pH. The proteasome has an ATP-dependent proteolytic activity. This chain is Probable proteasome subunit beta type-5 (pts1), found in Schizosaccharomyces pombe (strain 972 / ATCC 24843) (Fission yeast).